The chain runs to 520 residues: Probable DNA ligase (520 aa).

Position 213 (E213) interacts with ATP. Catalysis depends on K215, which acts as the N6-AMP-lysine intermediate. ATP is bound by residues R220, R235, E264, F300, R372, and K378.

This sequence belongs to the ATP-dependent DNA ligase family. It depends on Mg(2+) as a cofactor.

The enzyme catalyses ATP + (deoxyribonucleotide)n-3'-hydroxyl + 5'-phospho-(deoxyribonucleotide)m = (deoxyribonucleotide)n+m + AMP + diphosphate.. Functionally, DNA ligase that seals nicks in double-stranded DNA during DNA replication, DNA recombination and DNA repair. The polypeptide is Probable DNA ligase (Mycobacterium sp. (strain JLS)).